The chain runs to 327 residues: Pyruvate dehydrogenase E1 component subunit beta (327 aa).

Glutamate 60 lines the thiamine diphosphate pocket. Residues isoleucine 113, alanine 161, isoleucine 162, and asparagine 166 each contribute to the K(+) site.

In terms of assembly, heterodimer of an alpha and a beta chain. Requires thiamine diphosphate as cofactor.

The protein localises to the plastid. It is found in the chloroplast. It catalyses the reaction N(6)-[(R)-lipoyl]-L-lysyl-[protein] + pyruvate + H(+) = N(6)-[(R)-S(8)-acetyldihydrolipoyl]-L-lysyl-[protein] + CO2. In terms of biological role, the pyruvate dehydrogenase complex catalyzes the overall conversion of pyruvate to acetyl-CoA and CO(2). It contains multiple copies of three enzymatic components: pyruvate dehydrogenase (E1), dihydrolipoamide acetyltransferase (E2) and lipoamide dehydrogenase (E3). The sequence is that of Pyruvate dehydrogenase E1 component subunit beta (pdhB) from Mesostigma viride (Green alga).